The primary structure comprises 87 residues: Acyl-CoA-binding protein (87 aa).

S2 is subject to N-acetylserine. The ACB domain maps to S2 to I87. Residue K8 is modified to N6-acetyllysine; alternate. K8 carries the post-translational modification N6-succinyllysine; alternate. Residue K14 coordinates an acyl-CoA. K17 bears the N6-succinyllysine mark. Position 19 is an N6-acetyllysine (K19). Y29 is modified (phosphotyrosine). An acyl-CoA is bound by residues Y29 to K33, K51, K55, and Y74. N6-acetyllysine is present on K51. K55 carries the N6-acetyllysine; alternate modification. N6-succinyllysine; alternate is present on K55. K55 carries the N6-(2-hydroxyisobutyryl)lysine; alternate modification. K55 carries the N6-malonyllysine; alternate modification. N6-acetyllysine; alternate is present on K77. N6-succinyllysine; alternate is present on K77.

Belongs to the ACBP family. As to quaternary structure, monomer.

It localises to the endoplasmic reticulum. The protein resides in the golgi apparatus. Functionally, binds medium- and long-chain acyl-CoA esters with very high affinity and may function as an intracellular carrier of acyl-CoA esters. It is also able to displace diazepam from the benzodiazepine (BZD) recognition site located on the GABA type A receptor. It is therefore possible that this protein also acts as a neuropeptide to modulate the action of the GABA receptor. This Oryctolagus cuniculus (Rabbit) protein is Acyl-CoA-binding protein (DBI).